Here is an 87-residue protein sequence, read N- to C-terminus: MRAVVTVVGADKIGIVAGVTATLAELEANIIEISQTLMSGAFTMMMVVETQNSDFSAFQAELSRKGEALGVNIHVQNEAIFNAMHKL.

The 73-residue stretch at 4 to 76 folds into the ACT domain; that stretch reads VVTVVGADKI…EALGVNIHVQ (73 aa).

It belongs to the UPF0237 family.

The polypeptide is UPF0237 protein YjhC (yjhC) (Lactococcus lactis subsp. lactis (strain IL1403) (Streptococcus lactis)).